Reading from the N-terminus, the 321-residue chain is NADH-quinone oxidoreductase subunit H (321 aa).

8 helical membrane passes run 9 to 29 (LLAI…GAYM), 78 to 98 (IIFT…FAIM), 111 to 131 (IGIL…LLGG), 156 to 176 (FLGL…ISTI), 183 to 203 (IWNI…GLAI), 234 to 254 (FFIG…TLFF), 262 to 282 (LPPY…FILI), and 296 to 316 (ILGW…TAIV).

It belongs to the complex I subunit 1 family. As to quaternary structure, NDH-1 is composed of 14 different subunits. Subunits NuoA, H, J, K, L, M, N constitute the membrane sector of the complex.

It is found in the cell membrane. It carries out the reaction a quinone + NADH + 5 H(+)(in) = a quinol + NAD(+) + 4 H(+)(out). In terms of biological role, NDH-1 shuttles electrons from NADH, via FMN and iron-sulfur (Fe-S) centers, to quinones in the respiratory chain. The immediate electron acceptor for the enzyme in this species is believed to be ubiquinone. Couples the redox reaction to proton translocation (for every two electrons transferred, four hydrogen ions are translocated across the cytoplasmic membrane), and thus conserves the redox energy in a proton gradient. This subunit may bind ubiquinone. In Baumannia cicadellinicola subsp. Homalodisca coagulata, this protein is NADH-quinone oxidoreductase subunit H.